The following is a 173-amino-acid chain: Translation initiation factor IF-3 (173 aa).

It belongs to the IF-3 family. In terms of assembly, monomer.

Its subcellular location is the cytoplasm. In terms of biological role, IF-3 binds to the 30S ribosomal subunit and shifts the equilibrium between 70S ribosomes and their 50S and 30S subunits in favor of the free subunits, thus enhancing the availability of 30S subunits on which protein synthesis initiation begins. The polypeptide is Translation initiation factor IF-3 (Neisseria gonorrhoeae (strain ATCC 700825 / FA 1090)).